Reading from the N-terminus, the 232-residue chain is uncharacterized protein (232 aa).

This is an uncharacterized protein from Thermoproteus tenax (TTV1).